Here is a 125-residue protein sequence, read N- to C-terminus: Large ribosomal subunit protein bL21 (125 aa).

Residues 75 to 89 (FKKRRRQNSKRKRGH) show a composition bias toward basic residues. Disordered stretches follow at residues 75–94 (FKKR…QDLT) and 103–125 (AGGA…APEA). Over residues 106-125 (ASPAAAAASSETPAASAPEA) the composition is skewed to low complexity.

Belongs to the bacterial ribosomal protein bL21 family. As to quaternary structure, part of the 50S ribosomal subunit. Contacts protein L20.

This protein binds to 23S rRNA in the presence of protein L20. The chain is Large ribosomal subunit protein bL21 from Methylocella silvestris (strain DSM 15510 / CIP 108128 / LMG 27833 / NCIMB 13906 / BL2).